Here is a 425-residue protein sequence, read N- to C-terminus: 2-oxoglutarate and iron-dependent oxygenase JMJD4 homolog (425 aa).

One can recognise a JmjC domain in the interval 165 to 316; that stretch reads AAQMPGYNFY…MVWQNLKNNL (152 aa). The Fe cation site is built by histidine 212, aspartate 214, and histidine 284.

It belongs to the JMJD6 family. Fe(2+) is required as a cofactor.

Its subcellular location is the nucleus. It localises to the cytoplasm. The catalysed reaction is L-lysyl-[protein] + 2-oxoglutarate + O2 = 4-hydroxy-L-lysyl-[protein] + succinate + CO2. Functionally, catalyzes the 2-oxoglutarate and iron-dependent C4-lysyl hydroxylation of eRF1 thereby promoting the translational termination efficiency of eRF1. May be involved in regulation of chromatin structure, promoting expansion of heterochromatin. The protein is 2-oxoglutarate and iron-dependent oxygenase JMJD4 homolog of Drosophila melanogaster (Fruit fly).